We begin with the raw amino-acid sequence, 273 residues long: Dermonecrotic toxin LapSicTox-alphaIB1aiv (273 aa).

The active site involves His-5. Mg(2+)-binding residues include Glu-25 and Asp-27. Catalysis depends on His-41, which acts as the Nucleophile. 2 disulfide bridges follow: Cys-45/Cys-51 and Cys-47/Cys-190. Mg(2+) is bound at residue Asp-85. Asn-250 is a glycosylation site (N-linked (GlcNAc...) asparagine).

Belongs to the arthropod phospholipase D family. Class II subfamily. Requires Mg(2+) as cofactor. As to expression, expressed by the venom gland.

The protein resides in the secreted. It carries out the reaction an N-(acyl)-sphingosylphosphocholine = an N-(acyl)-sphingosyl-1,3-cyclic phosphate + choline. It catalyses the reaction an N-(acyl)-sphingosylphosphoethanolamine = an N-(acyl)-sphingosyl-1,3-cyclic phosphate + ethanolamine. The enzyme catalyses a 1-acyl-sn-glycero-3-phosphocholine = a 1-acyl-sn-glycero-2,3-cyclic phosphate + choline. The catalysed reaction is a 1-acyl-sn-glycero-3-phosphoethanolamine = a 1-acyl-sn-glycero-2,3-cyclic phosphate + ethanolamine. In terms of biological role, dermonecrotic toxins cleave the phosphodiester linkage between the phosphate and headgroup of certain phospholipids (sphingolipid and lysolipid substrates), forming an alcohol (often choline) and a cyclic phosphate. This toxin acts on sphingomyelin (SM). It may also act on ceramide phosphoethanolamine (CPE), lysophosphatidylcholine (LPC) and lysophosphatidylethanolamine (LPE), but not on lysophosphatidylserine (LPS), and lysophosphatidylglycerol (LPG). It acts by transphosphatidylation, releasing exclusively cyclic phosphate products as second products. Induces dermonecrosis, hemolysis, increased vascular permeability, edema, inflammatory response, and platelet aggregation. The polypeptide is Dermonecrotic toxin LapSicTox-alphaIB1aiv (Loxosceles apachea (Apache recluse spider)).